Consider the following 317-residue polypeptide: Melanocyte-stimulating hormone receptor (317 aa).

Residues 1-37 are Extracellular-facing; sequence MPVQGSQRRLLGSLNSTPTATPHLGLAANQTGARCLE. N29 carries N-linked (GlcNAc...) asparagine glycosylation. A helical membrane pass occupies residues 38 to 63; that stretch reads VSIPDGLFLSLGLVSLVENVLVVTAI. Over 64–72 the chain is Cytoplasmic; the sequence is AKNRNLHSP. The helical transmembrane segment at 73-93 threads the bilayer; sequence MYCFICCLALSDLLVSGSNML. The Extracellular segment spans residues 94–118; the sequence is ETAVILLLEAGALAARAAVVQQLDN. The chain crosses the membrane as a helical span at residues 119–140; it reads VIDVITCSSMLSSLCFLGAIAV. The Cytoplasmic segment spans residues 141–163; it reads DRYISIFYALRYHSIVTLPRARR. The chain crosses the membrane as a helical span at residues 164–183; it reads AVAAIWVASVLFSMLFIAYY. Topologically, residues 184-191 are extracellular; it reads DHAAVLLC. The helical transmembrane segment at 192-211 threads the bilayer; the sequence is LVVFFLAMLVLMAVLYVHML. Topologically, residues 212–240 are cytoplasmic; sequence ARACQHAQGIARLHKRQRPAHQSFGLKGA. Residues 241–266 form a helical membrane-spanning segment; sequence ATLTILLGIFFLCWGPFFLHLTLIVL. The Extracellular segment spans residues 267–279; the sequence is CPQHPTCSCIFKN. The helical transmembrane segment at 280 to 300 threads the bilayer; it reads FNLFLTLIICNAIIDPLIYAF. The Cytoplasmic portion of the chain corresponds to 301–317; the sequence is RSQELRRTLKEVLLCSW. The S-palmitoyl cysteine moiety is linked to residue C315.

Belongs to the G-protein coupled receptor 1 family. Interacts with MGRN1, but does not undergo MGRN1-mediated ubiquitination; this interaction competes with GNAS-binding and thus inhibits agonist-induced cAMP production. Interacts with OPN3; the interaction results in a decrease in MC1R-mediated cAMP signaling and ultimately a decrease in melanin production in melanocytes.

Its subcellular location is the cell membrane. Receptor for MSH (alpha, beta and gamma) and ACTH. The activity of this receptor is mediated by G proteins which activate adenylate cyclase. Mediates melanogenesis, the production of eumelanin (black/brown) and phaeomelanin (red/yellow), via regulation of cAMP signaling in melanocytes. This Erythrocebus patas (Red guenon) protein is Melanocyte-stimulating hormone receptor (MC1R).